Reading from the N-terminus, the 291-residue chain is Pantothenate synthetase (291 aa).

30-37 (MGYLHVGH) provides a ligand contact to ATP. Residue H37 is the Proton donor of the active site. (R)-pantoate is bound at residue Q61. Q61 contributes to the beta-alanine binding site. 147–150 (GEKD) contributes to the ATP binding site. Q153 serves as a coordination point for (R)-pantoate. Residues V176 and 184-187 (CSSR) each bind ATP.

The protein belongs to the pantothenate synthetase family. In terms of assembly, homodimer.

It localises to the cytoplasm. It carries out the reaction (R)-pantoate + beta-alanine + ATP = (R)-pantothenate + AMP + diphosphate + H(+). The protein operates within cofactor biosynthesis; (R)-pantothenate biosynthesis; (R)-pantothenate from (R)-pantoate and beta-alanine: step 1/1. Its function is as follows. Catalyzes the condensation of pantoate with beta-alanine in an ATP-dependent reaction via a pantoyl-adenylate intermediate. The sequence is that of Pantothenate synthetase from Rhizobium meliloti (strain 1021) (Ensifer meliloti).